Here is a 393-residue protein sequence, read N- to C-terminus: MAKKTVRDIDVKGKRVLLRVDFNVPMENGRVADDVKIKEAVPTINYLIGQKARVILVSHLGRPKGRVDERYKMDPVARRLSELLGKTVVKAGDCVGEAARSAVAQMQDGDVVLLENVRFHPEEEKNDEKFARQLAELADVFVNDAFGTAHRAHASTEGVAGFLPAVAGLLMEKELEILGRLLTSPERPFAAVVGGSKVSDKLGVIFNLLTKVDTVIIGGGMANTFLKAQGYSVGKSLLEADKIDLARKLIAEARSREVKLLLPVDVVVAPGPAPGQEQRTVPVDQIPAEWMALDIGPESIRLFTEALRAARTVVWNGPMGVFEMDPFARGTEAIARTLAELNAVTVIGGGDTAAAAKKAGVAGKMTHISTGGGASLEFLEGKQLPGVRALLDK.

Substrate-binding positions include Asp21 to Asn23, His59 to Arg62, Arg118, and Arg151. ATP-binding positions include Lys201, Glu323, and Gly349–Thr352.

Belongs to the phosphoglycerate kinase family. Monomer.

The protein resides in the cytoplasm. It carries out the reaction (2R)-3-phosphoglycerate + ATP = (2R)-3-phospho-glyceroyl phosphate + ADP. Its pathway is carbohydrate degradation; glycolysis; pyruvate from D-glyceraldehyde 3-phosphate: step 2/5. The sequence is that of Phosphoglycerate kinase from Pelotomaculum thermopropionicum (strain DSM 13744 / JCM 10971 / SI).